A 358-amino-acid chain; its full sequence is Cytoplasmic dynein 2 light intermediate chain 1 (358 aa).

Disordered regions lie at residues 1–35 (MPKVSSDTLWDIAAAEVRSRESRTDEEEAEEEDAH) and 307–358 (ESTR…ALDP). The span at 24–33 (TDEEEAEEED) shows a compositional bias: acidic residues. Basic and acidic residues-rich tracts occupy residues 307-320 (ESTRERKELKDPVK) and 333-349 (RAQKDQELDQYKREQAK).

It belongs to the dynein light intermediate chain family. As to quaternary structure, light intermediate chain of the cytoplasmic dynein complex 2, a multisubunit complex composed at least of eleven different proteins. The cytoplasmic dynein 2 complex consists of two catalytic heavy chains (HCs) and a number of non-catalytic subunits presented by intermediate chains (ICs), light intermediate chains (LICs) and light chains (LCs). Among them, a heavy chain (DYNC2H1), two intermediate chains (DYNC2I2 and DYNC2I1), a light intermediate chain (DYNC2LI1), and a light chain (DYNLT2B) are unique to the dynein-2 complex, but a subset of light chains are also shared by dynein-1 and dynein-2 complexes. Dynein-2 complex is built around two copies of cytoplasmic dynein 2 heavy chain 1 (DYNC2H1). The C-terminal region forms the motor domain, which converts the energy from ATP hydrolysis into movement. Its N-terminal region forms the tail, an extended structure that binds the other subunits and holds the two heavy chains in a homodimer.

It is found in the cytoplasm. The protein resides in the cell projection. Its subcellular location is the cilium. The protein localises to the cytoskeleton. It localises to the cilium basal body. It is found in the cilium axoneme. The protein resides in the microtubule organizing center. Its subcellular location is the centrosome. Functionally, acts as one of several non-catalytic accessory components of the cytoplasmic dynein 2 complex (dynein-2 complex), a motor protein complex that drives the movement of cargos along microtubules within cilia and flagella in concert with the intraflagellar transport (IFT) system, facilitating the assembly of these organelles. The polypeptide is Cytoplasmic dynein 2 light intermediate chain 1 (dync2li1) (Danio rerio (Zebrafish)).